The sequence spans 556 residues: Sphingomyelinase C (556 aa).

An N-terminal signal peptide occupies residues 1-27; that stretch reads MRIKKYTKVRLLVNCCLLLFFLIDCGA.

The protein localises to the secreted. The catalysed reaction is a sphingomyelin + H2O = phosphocholine + an N-acylsphing-4-enine + H(+). This is Sphingomyelinase C (sph) from Leptospira interrogans.